Reading from the N-terminus, the 225-residue chain is Thymidylate kinase (225 aa).

Residue Gly15–Ser22 participates in ATP binding.

It belongs to the thymidylate kinase family.

It catalyses the reaction dTMP + ATP = dTDP + ADP. Functionally, phosphorylation of dTMP to form dTDP in both de novo and salvage pathways of dTTP synthesis. In Protochlamydia amoebophila (strain UWE25), this protein is Thymidylate kinase.